A 471-amino-acid polypeptide reads, in one-letter code: 3-isopropylmalate dehydratase large subunit (471 aa).

Cys347, Cys407, and Cys410 together coordinate [4Fe-4S] cluster.

Belongs to the aconitase/IPM isomerase family. LeuC type 1 subfamily. As to quaternary structure, heterodimer of LeuC and LeuD. The cofactor is [4Fe-4S] cluster.

The enzyme catalyses (2R,3S)-3-isopropylmalate = (2S)-2-isopropylmalate. The protein operates within amino-acid biosynthesis; L-leucine biosynthesis; L-leucine from 3-methyl-2-oxobutanoate: step 2/4. Functionally, catalyzes the isomerization between 2-isopropylmalate and 3-isopropylmalate, via the formation of 2-isopropylmaleate. The chain is 3-isopropylmalate dehydratase large subunit from Edwardsiella ictaluri (strain 93-146).